The sequence spans 120 residues: NADH-ubiquinone oxidoreductase chain 3 (120 aa).

Transmembrane regions (helical) follow at residues 6 to 26 (LLFF…LTWV), 63 to 83 (IVCV…PFFF), and 85 to 105 (FFLV…FVFY).

Belongs to the complex I subunit 3 family.

The protein resides in the mitochondrion membrane. The enzyme catalyses a ubiquinone + NADH + 5 H(+)(in) = a ubiquinol + NAD(+) + 4 H(+)(out). Core subunit of the mitochondrial membrane respiratory chain NADH dehydrogenase (Complex I) that is believed to belong to the minimal assembly required for catalysis. Complex I functions in the transfer of electrons from NADH to the respiratory chain. The immediate electron acceptor for the enzyme is believed to be ubiquinone. The chain is NADH-ubiquinone oxidoreductase chain 3 (ND3) from Paramecium tetraurelia.